We begin with the raw amino-acid sequence, 162 residues long: Universal stress protein MJ0577 (162 aa).

ATP-binding positions include Pro11, Val41, 127–133 (GSHGKTN), and 141–143 (SVT).

The protein belongs to the universal stress protein A family. In terms of assembly, homodimer. Requires Mn(2+) as cofactor.

It localises to the cytoplasm. The protein is Universal stress protein MJ0577 of Methanocaldococcus jannaschii (strain ATCC 43067 / DSM 2661 / JAL-1 / JCM 10045 / NBRC 100440) (Methanococcus jannaschii).